A 30-amino-acid polypeptide reads, in one-letter code: Cyclotide mden-E (30 aa).

A cross-link (cyclopeptide (Gly-Asn)) is located at residues 1–30 (GIPCGESCVYIPCITAAIGCSCKSKVCYRN). 3 cysteine pairs are disulfide-bonded: cysteine 4/cysteine 20, cysteine 8/cysteine 22, and cysteine 13/cysteine 27.

The protein belongs to the cyclotide family. Bracelet subfamily. This is a cyclic peptide.

Functionally, probably participates in a plant defense mechanism. In Melicytus dentatus (Tree violet), this protein is Cyclotide mden-E.